The primary structure comprises 1447 residues: ATP-dependent helicase SGS1 (1447 aa).

Disordered regions lie at residues 37–78 (IANK…TATK), 243–264 (KKDG…QDDN), 342–430 (KEGA…EEKE), 552–572 (KENE…LSDS), and 601–639 (TERK…FDDD). The segment covering 59 to 78 (GTTNFITSIPASGPTNTATK) has biased composition (polar residues). The span at 243-253 (KKDGMSKDQSK) shows a compositional bias: basic and acidic residues. A compositionally biased stretch (polar residues) spans 254–264 (GRSQVSSQDDN). A compositionally biased stretch (basic and acidic residues) spans 363-386 (ELTRRRNMRSREPVNYRIPDRDDP). 2 stretches are compositionally biased toward acidic residues: residues 403 to 415 (EREE…EAED) and 552 to 561 (KENEDFEEDN). A compositionally biased stretch (basic and acidic residues) spans 601-611 (TERKLTGDNEH). The Helicase ATP-binding domain occupies 687–864 (VNATLQGKDV…IHNLELKEPV (178 aa)). Position 714 to 721 (714 to 721 (AVVKSGKT)) interacts with ATP. The short motif at 808-811 (DEAH) is the DEAH box element. Residues 886–1035 (TIFEICDAVK…NKEKHLNKLQ (150 aa)) enclose the Helicase C-terminal domain. In terms of domain architecture, HRDC spans 1272–1351 (LNNLRMTYER…ADLSKKRSSE (80 aa)). Residues 1402 to 1411 (QIRQSQLPKN) show a composition bias toward polar residues. The disordered stretch occupies residues 1402-1447 (QIRQSQLPKNTTSSKSGTRSISKSSKKSANGRRGFRNYRGHYRGRK). Low complexity predominate over residues 1412 to 1424 (TTSSKSGTRSISK). A compositionally biased stretch (basic residues) spans 1425 to 1447 (SSKKSANGRRGFRNYRGHYRGRK).

Belongs to the helicase family. RecQ subfamily. Heterodimer with TOP3. Forms a complex with TOP3 and RMI1. Forms a ternary complex with a MLH1-MLH3 heterodimer (MutLbeta) during meiosis. Interacts with TOP2. The cofactor is Mg(2+).

Its subcellular location is the nucleus. The protein resides in the nucleolus. It carries out the reaction Couples ATP hydrolysis with the unwinding of duplex DNA by translocating in the 3'-5' direction.. It catalyses the reaction ATP + H2O = ADP + phosphate + H(+). With respect to regulation, helicase activity on G-quadruplex DNA is inhibited by ATP-gamma-S. ATP-dependent 3'-5' DNA helicase able to unwind duplex DNA or DNA:RNA heteroduplex. Unwinds G-quadruplex DNA; unwinding occurs in the 3'-5' direction, requires a 3' single-stranded end of at least 7 nucleotides. Helicase activity is higher on G-quadruplex substrates than on duplex DNA substrates. Assayed with a catalytic fragment (residues 400-1268). Telomeres and rDNA are notably G-rich; formation of G-quadruplex DNA would block DNA replication and transcription. Acts as an integral component of the S-phase checkpoint response, which arrests cells due to DNA damage or blocked fork progression during DNA replication. Can create a deleterious topological substrate that TOP3 preferentially resolves. The TOP3-SGS1 protein complex may function as a eukaryotic reverse gyrase introducing positive supercoils into extrachromosomal ribosomal DNA rings. Together with topoisomerase II has a role in chromosomal segregation. Maintains rDNA structure where it has a role in re-starting stalled replication forks. The polypeptide is ATP-dependent helicase SGS1 (Saccharomyces cerevisiae (strain ATCC 204508 / S288c) (Baker's yeast)).